We begin with the raw amino-acid sequence, 58 residues long: Large ribosomal subunit protein bL32 (58 aa).

It belongs to the bacterial ribosomal protein bL32 family.

The chain is Large ribosomal subunit protein bL32 from Caldicellulosiruptor bescii (strain ATCC BAA-1888 / DSM 6725 / KCTC 15123 / Z-1320) (Anaerocellum thermophilum).